The chain runs to 282 residues: Protein-export membrane protein SecF (282 aa).

Transmembrane regions (helical) follow at residues 9-29, 120-140, 149-169, 174-194, 214-234, and 236-256; these read IAIP…KGIP, EGFK…YLYF, IILS…LLGI, ATIA…ILLT, KTGL…LIVV, and LFIP…LALI.

Belongs to the SecD/SecF family. SecF subfamily. As to quaternary structure, part of the protein translocation apparatus. Forms a complex with SecD.

It is found in the cell membrane. Involved in protein export. The polypeptide is Protein-export membrane protein SecF (Methanocaldococcus jannaschii (strain ATCC 43067 / DSM 2661 / JAL-1 / JCM 10045 / NBRC 100440) (Methanococcus jannaschii)).